Consider the following 129-residue polypeptide: Sulfurtransferase TusD (129 aa).

The Cysteine persulfide intermediate role is filled by C79.

Belongs to the DsrE/TusD family. As to quaternary structure, heterohexamer, formed by a dimer of trimers. The hexameric TusBCD complex contains 2 copies each of TusB, TusC and TusD. The TusBCD complex interacts with TusE.

Its subcellular location is the cytoplasm. Its function is as follows. Part of a sulfur-relay system required for 2-thiolation of 5-methylaminomethyl-2-thiouridine (mnm(5)s(2)U) at tRNA wobble positions. Accepts sulfur from TusA and transfers it in turn to TusE. The protein is Sulfurtransferase TusD of Pectobacterium atrosepticum (strain SCRI 1043 / ATCC BAA-672) (Erwinia carotovora subsp. atroseptica).